A 214-amino-acid polypeptide reads, in one-letter code: uncharacterized protein (214 aa).

Helical transmembrane passes span 43–63, 84–104, 116–136, and 150–170; these read IQKP…AAHI, IEWA…IPVI, ALVI…EYFI, and PVTR…FGIF.

The protein resides in the host membrane. This is an uncharacterized protein from Citrus leprosis virus C (isolate Citrus sinesis/Brazil/Cordeiropolis/2003) (CiLV-C).